The chain runs to 314 residues: Ribonuclease Z (314 aa).

Residues H62, H64, D66, H67, H144, D215, and H273 each coordinate Zn(2+). D66 functions as the Proton acceptor in the catalytic mechanism.

Belongs to the RNase Z family. Homodimer. It depends on Zn(2+) as a cofactor.

It catalyses the reaction Endonucleolytic cleavage of RNA, removing extra 3' nucleotides from tRNA precursor, generating 3' termini of tRNAs. A 3'-hydroxy group is left at the tRNA terminus and a 5'-phosphoryl group is left at the trailer molecule.. Functionally, zinc phosphodiesterase, which displays some tRNA 3'-processing endonuclease activity. Probably involved in tRNA maturation, by removing a 3'-trailer from precursor tRNA. This Prochlorococcus marinus (strain NATL1A) protein is Ribonuclease Z.